We begin with the raw amino-acid sequence, 557 residues long: DNA replication factor Cdt1 (557 aa).

The short motif at 1-25 (MAQSRVTDFYACRRPGLTTPRAKSI) is the PIP-box K+4 motif element. A disordered region spans residues 20–113 (PRAKSICLTP…VCPSPVKRTK (94 aa)). Thr-28 carries the phosphothreonine; by MAPK8 modification. Residue Ser-30 is modified to Phosphoserine. Positions 65–67 (RRL) match the Cyclin-binding motif motif. Positions 69-81 (LPGLDSCPSSLPE) are enriched in low complexity. A compositionally biased stretch (pro residues) spans 82–106 (PSSPAEPSPPADPSPPADPGSPVCP). A Phosphoserine; by MAPK8 modification is found at Ser-107. The tract at residues 163-203 (PSTPDAKVPTEQPCVEKAPAYQRFHALAQPGLPGLVLPYKY) is interaction with GMNN. Ser-392 is modified (phosphoserine). The tract at residues 397–427 (RSAEPGSPGTSTPPLPATPPATPPAASPSAL) is disordered. A compositionally biased stretch (pro residues) spans 407–422 (STPPLPATPPATPPAA). The tract at residues 463 to 557 (LERLPELARV…LAHHVHAEGL (95 aa)) is interaction with LRWD1.

This sequence belongs to the Cdt1 family. Interacts with GMNN; the interaction inhibits the binding of the MCM complex to origins of replication. Interacts with MCM6. Interacts with CDC6; are mutually dependent on one another for loading MCM complexes onto chromatin. Interacts with PCNA. Interacts with LRWD1 during G1 phase and during mitosis. Interacts with NDC80 subunit of the NDC80 complex; leading to kinetochore localization. Interacts with KAT7. Interacts with ubiquitin-binding protein FAF1; the interaction is likely to promote CDT1 degradation. Post-translationally, two independent E3 ubiquitin ligase complexes, SCF(SKP2) and the DCX(DTL) complex, mediated CDT1 degradation in S phase. Ubiquitinated by the DCX(DTL) complex, in response to DNA damage, leading to its degradation. Ubiquitination by the DCX(DTL) complex is necessary to ensure proper cell cycle regulation and is PCNA-dependent: interacts with PCNA via its PIP-box, while the presence of the containing the 'K+4' motif in the PIP box, recruit the DCX(DTL) complex, leading to its degradation. Phosphorylation at Thr-28 by CDK2 targets CDT1 for ubiquitynation by SCF(SKP2) E3 ubiquitin ligase and subsequent degradation. The interaction with GMNN protects it against ubiquitination. Deubiquitinated by USP37. Ubiquitinated and degraded by the SCF(FBXO31) complex during the G2 phase to prevent re-replication. Phosphorylation by cyclin A-dependent kinases at Thr-28 targets CDT1 for ubiquitynation by SCF(SKP2) E3 ubiquitin ligase and subsequent degradation. Phosphorylated at Thr-28 by MAPK8/JNK1, which blocks replication licensing in response to stress. Binding to GMNN is not affected by phosphorylation.

The protein resides in the nucleus. Its subcellular location is the chromosome. It localises to the centromere. It is found in the kinetochore. Functionally, required for both DNA replication and mitosis. DNA replication licensing factor, required for pre-replication complex assembly. Cooperates with CDC6 and the origin recognition complex (ORC) during G1 phase of the cell cycle to promote the loading of the mini-chromosome maintenance (MCM) complex onto DNA to generate pre-replication complexes (pre-RC). Required also for mitosis by promoting stable kinetochore-microtubule attachments. Potential oncogene. This chain is DNA replication factor Cdt1, found in Mus musculus (Mouse).